Consider the following 283-residue polypeptide: Pyridoxal kinase PdxY (283 aa).

Residue Ser8 coordinates substrate. ATP is bound by residues Asp110 and Glu147. Asp219 is a substrate binding site.

It belongs to the pyridoxine kinase family. PdxY subfamily. As to quaternary structure, homodimer. Mg(2+) serves as cofactor.

It catalyses the reaction pyridoxal + ATP = pyridoxal 5'-phosphate + ADP + H(+). It participates in cofactor metabolism; pyridoxal 5'-phosphate salvage; pyridoxal 5'-phosphate from pyridoxal: step 1/1. Its function is as follows. Pyridoxal kinase involved in the salvage pathway of pyridoxal 5'-phosphate (PLP). Catalyzes the phosphorylation of pyridoxal to PLP. This chain is Pyridoxal kinase PdxY, found in Corynebacterium diphtheriae (strain ATCC 700971 / NCTC 13129 / Biotype gravis).